Reading from the N-terminus, the 428-residue chain is D-alanine--D-alanine ligase (428 aa).

An ATP-grasp domain is found at 205 to 424 (KVVLDAAGIP…YTELITRLIE (220 aa)). 237–299 (DAGLTYPLFV…EQGIDGREIE (63 aa)) provides a ligand contact to ATP. Mg(2+) contacts are provided by D378, E391, and N393.

It belongs to the D-alanine--D-alanine ligase family. It depends on Mg(2+) as a cofactor. Mn(2+) is required as a cofactor.

It localises to the cytoplasm. It carries out the reaction 2 D-alanine + ATP = D-alanyl-D-alanine + ADP + phosphate + H(+). It functions in the pathway cell wall biogenesis; peptidoglycan biosynthesis. Its function is as follows. Cell wall formation. The protein is D-alanine--D-alanine ligase of Bifidobacterium longum (strain NCC 2705).